The primary structure comprises 162 residues: Crossover junction endodeoxyribonuclease RuvC (162 aa).

Catalysis depends on residues Asp8, Glu69, and His141. Residues Asp8, Glu69, and His141 each coordinate Mg(2+).

Belongs to the RuvC family. Homodimer which binds Holliday junction (HJ) DNA. The HJ becomes 2-fold symmetrical on binding to RuvC with unstacked arms; it has a different conformation from HJ DNA in complex with RuvA. In the full resolvosome a probable DNA-RuvA(4)-RuvB(12)-RuvC(2) complex forms which resolves the HJ. Requires Mg(2+) as cofactor.

It is found in the cytoplasm. The catalysed reaction is Endonucleolytic cleavage at a junction such as a reciprocal single-stranded crossover between two homologous DNA duplexes (Holliday junction).. Functionally, the RuvA-RuvB-RuvC complex processes Holliday junction (HJ) DNA during genetic recombination and DNA repair. Endonuclease that resolves HJ intermediates. Cleaves cruciform DNA by making single-stranded nicks across the HJ at symmetrical positions within the homologous arms, yielding a 5'-phosphate and a 3'-hydroxyl group; requires a central core of homology in the junction. The consensus cleavage sequence is 5'-(A/T)TT(C/G)-3'. Cleavage occurs on the 3'-side of the TT dinucleotide at the point of strand exchange. HJ branch migration catalyzed by RuvA-RuvB allows RuvC to scan DNA until it finds its consensus sequence, where it cleaves and resolves the cruciform DNA. The sequence is that of Crossover junction endodeoxyribonuclease RuvC from Wolbachia sp. subsp. Drosophila simulans (strain wRi).